A 243-amino-acid polypeptide reads, in one-letter code: DNA repair protein RecO (243 aa).

Belongs to the RecO family.

In terms of biological role, involved in DNA repair and RecF pathway recombination. The protein is DNA repair protein RecO of Xylella fastidiosa (strain M12).